A 386-amino-acid polypeptide reads, in one-letter code: Protein DOM34 (386 aa).

It belongs to the eukaryotic release factor 1 family. Pelota subfamily. In terms of assembly, monomer. Component of the Dom34-Hbs1 complex, also named Pelota-HBS1L complex, composed of DOM34 and HBS1. It depends on a divalent metal cation as a cofactor.

The protein localises to the cytoplasm. Its function is as follows. Component of the Dom34-Hbs1 complex, a complex that recognizes stalled ribosomes and triggers the No-Go Decay (NGD) pathway. In the Dom34-Hbs1 complex, DOM34 recognizes ribosomes stalled at the 3' end of an mRNA and engages stalled ribosomes by destabilizing mRNA in the mRNA channel. Following ribosome-binding, the Dom34-Hbs1 complex promotes the disassembly of stalled ribosomes, followed by degradation of damaged mRNAs as part of the NGD pathway. The Dom34-Hbs1 complex is also involved in non-functional rRNA decay. The protein is Protein DOM34 of Saccharomyces cerevisiae (strain ATCC 204508 / S288c) (Baker's yeast).